The chain runs to 255 residues: Proteasome subunit alpha (255 aa).

It belongs to the peptidase T1A family. As to quaternary structure, the 20S proteasome core is composed of 14 alpha and 14 beta subunits that assemble into four stacked heptameric rings, resulting in a barrel-shaped structure. The two inner rings, each composed of seven catalytic beta subunits, are sandwiched by two outer rings, each composed of seven alpha subunits. The catalytic chamber with the active sites is on the inside of the barrel. Has a gated structure, the ends of the cylinder being occluded by the N-termini of the alpha-subunits. Is capped at one or both ends by the proteasome regulatory ATPase, PAN.

It is found in the cytoplasm. The formation of the proteasomal ATPase PAN-20S proteasome complex, via the docking of the C-termini of PAN into the intersubunit pockets in the alpha-rings, triggers opening of the gate for substrate entry. Interconversion between the open-gate and close-gate conformations leads to a dynamic regulation of the 20S proteasome proteolysis activity. Functionally, component of the proteasome core, a large protease complex with broad specificity involved in protein degradation. The sequence is that of Proteasome subunit alpha from Natronomonas pharaonis (strain ATCC 35678 / DSM 2160 / CIP 103997 / JCM 8858 / NBRC 14720 / NCIMB 2260 / Gabara) (Halobacterium pharaonis).